Reading from the N-terminus, the 294-residue chain is Bifunctional protein FolD (294 aa).

NADP(+)-binding positions include 166–168, Ser-191, and Ile-232; that span reads GRS.

Belongs to the tetrahydrofolate dehydrogenase/cyclohydrolase family. As to quaternary structure, homodimer.

The enzyme catalyses (6R)-5,10-methylene-5,6,7,8-tetrahydrofolate + NADP(+) = (6R)-5,10-methenyltetrahydrofolate + NADPH. It catalyses the reaction (6R)-5,10-methenyltetrahydrofolate + H2O = (6R)-10-formyltetrahydrofolate + H(+). The protein operates within one-carbon metabolism; tetrahydrofolate interconversion. In terms of biological role, catalyzes the oxidation of 5,10-methylenetetrahydrofolate to 5,10-methenyltetrahydrofolate and then the hydrolysis of 5,10-methenyltetrahydrofolate to 10-formyltetrahydrofolate. The chain is Bifunctional protein FolD from Bradyrhizobium diazoefficiens (strain JCM 10833 / BCRC 13528 / IAM 13628 / NBRC 14792 / USDA 110).